A 270-amino-acid polypeptide reads, in one-letter code: 4-hydroxy-4-methyl-2-oxoglutarate aldolase tasA (270 aa).

The active-site Proton acceptor is histidine 49. Residues glutamate 156 and aspartate 182 each coordinate a divalent metal cation. Aspartate 182 contributes to the substrate binding site.

The protein belongs to the HpcH/HpaI aldolase family. In terms of assembly, homohexamer; trimer of dimers. Co(2+) serves as cofactor. Requires Mn(2+) as cofactor. It depends on Zn(2+) as a cofactor. Fe(2+) is required as a cofactor. The cofactor is Mg(2+).

It carries out the reaction 4-hydroxy-4-methyl-2-oxoglutarate = 2 pyruvate. It functions in the pathway secondary metabolite biosynthesis. 4-hydroxy-4-methyl-2-oxoglutarate aldolase; part of the gene cluster that mediates the biosynthesis of the tetramic acids Sch210971 and Sch210972, potential anti-HIV fungal natural product that contain a decalin core. The PKS module of tasS together with the enoylreductase tasC catalyze the formation of the polyketide unit which is then conjugated to 4-hydroxyl-4-methyl glutamate (HMG) by the condensation domain of the tasS NRPS module. One unique structural feature of Sch210971 and Sch210972 is the tetramic acid motif proposed to be derived from the non-proteinogenic amino acid HMG, by a Dieckmann-type condensation catalyzed by the reductase domain of tasS. The aldolase tasA catalyzes the aldol condensation of 2 molecules of pyruvic acid to yield the intermediate 4-hydroxyl-4-methyl-2-oxoglutarate (HMOG), which can then be stereoselectively transaminated, may be by tasG, to form HMG. The Diels-Alderase tas3 then uses the Dieckmann product of tasS as substrate and catalyzes the Diels-Alder cycloaddition to form the decalin ring of Sch210971 and Sch210972. The polypeptide is 4-hydroxy-4-methyl-2-oxoglutarate aldolase tasA (Hapsidospora irregularis).